A 341-amino-acid polypeptide reads, in one-letter code: Phenylalanine--tRNA ligase alpha subunit (341 aa).

Position 254 (Glu254) interacts with Mg(2+).

It belongs to the class-II aminoacyl-tRNA synthetase family. Phe-tRNA synthetase alpha subunit type 1 subfamily. As to quaternary structure, tetramer of two alpha and two beta subunits. Requires Mg(2+) as cofactor.

The protein localises to the cytoplasm. The enzyme catalyses tRNA(Phe) + L-phenylalanine + ATP = L-phenylalanyl-tRNA(Phe) + AMP + diphosphate + H(+). The protein is Phenylalanine--tRNA ligase alpha subunit of Chlorobaculum tepidum (strain ATCC 49652 / DSM 12025 / NBRC 103806 / TLS) (Chlorobium tepidum).